A 264-amino-acid chain; its full sequence is Ribonuclease HII (264 aa).

Residues 69 to 263 form the RNase H type-2 domain; that stretch reads KVVCGIDEVG…EENAKTITKP (195 aa). A divalent metal cation is bound by residues Asp-75, Glu-76, and Asp-166.

The protein belongs to the RNase HII family. Mn(2+) serves as cofactor. Requires Mg(2+) as cofactor.

The protein localises to the cytoplasm. It carries out the reaction Endonucleolytic cleavage to 5'-phosphomonoester.. Endonuclease that specifically degrades the RNA of RNA-DNA hybrids. In Macrococcus caseolyticus (strain JCSC5402) (Macrococcoides caseolyticum), this protein is Ribonuclease HII.